The sequence spans 678 residues: Zinc finger protein 334 (678 aa).

The KRAB domain maps to 8–79 (VSFQDLTVNF…EEFSNQNYPE (72 aa)). 14 consecutive C2H2-type zinc fingers follow at residues 235–257 (NEPC…QRIH), 263–285 (YVCN…QRIH), 291–313 (YECS…QKIH), 319–341 (YECN…FRSH), 347–369 (YECK…QRTH), 375–397 (NECK…QRIH), 403–425 (YECS…RRSH), 431–453 (YECS…QITH), 459–481 (YECN…QRTH), 542–564 (YECN…QRTH), 570–592 (YECN…QRTH), 598–620 (YERN…RRIH), 626–648 (YECN…QKIH), and 654–676 (YECN…QKSH).

It belongs to the krueppel C2H2-type zinc-finger protein family.

The protein localises to the nucleus. In terms of biological role, may be involved in transcriptional regulation. This chain is Zinc finger protein 334 (ZNF334), found in Pongo abelii (Sumatran orangutan).